A 155-amino-acid chain; its full sequence is 6,7-dimethyl-8-ribityllumazine synthase (155 aa).

Residues F24, 58–60, and 82–84 each bind 5-amino-6-(D-ribitylamino)uracil; these read AFE and AII. 87-88 is a binding site for (2S)-2-hydroxy-3-oxobutyl phosphate; that stretch reads ST. H90 acts as the Proton donor in catalysis. Position 115 (F115) interacts with 5-amino-6-(D-ribitylamino)uracil. R129 provides a ligand contact to (2S)-2-hydroxy-3-oxobutyl phosphate.

Belongs to the DMRL synthase family.

It carries out the reaction (2S)-2-hydroxy-3-oxobutyl phosphate + 5-amino-6-(D-ribitylamino)uracil = 6,7-dimethyl-8-(1-D-ribityl)lumazine + phosphate + 2 H2O + H(+). Its pathway is cofactor biosynthesis; riboflavin biosynthesis; riboflavin from 2-hydroxy-3-oxobutyl phosphate and 5-amino-6-(D-ribitylamino)uracil: step 1/2. Its function is as follows. Catalyzes the formation of 6,7-dimethyl-8-ribityllumazine by condensation of 5-amino-6-(D-ribitylamino)uracil with 3,4-dihydroxy-2-butanone 4-phosphate. This is the penultimate step in the biosynthesis of riboflavin. This is 6,7-dimethyl-8-ribityllumazine synthase from Chlorobium phaeovibrioides (strain DSM 265 / 1930) (Prosthecochloris vibrioformis (strain DSM 265)).